A 619-amino-acid polypeptide reads, in one-letter code: Laccase (619 aa).

Residues 1-21 (MKFLGIAALVAGLLAPSLVLG) form the signal peptide. A propeptide spanning residues 22-49 (APAPGTEGVNLLTPVDKRQDSQAERYGG) is cleaved from the precursor. An intrachain disulfide couples Cys-55 to Cys-63. Plastocyanin-like domains are found at residues 84 to 207 (TRRY…IVIN) and 216 to 373 (VDLG…LPTN). Residue Asn-139 is glycosylated (N-linked (GlcNAc...) asparagine). Residues His-144, His-146, His-189, and His-191 each contribute to the Cu cation site. Cystine bridges form between Cys-165-Cys-586 and Cys-349-Cys-383. Residues Asn-282, Asn-295, and Asn-340 are each glycosylated (N-linked (GlcNAc...) asparagine). 2 N-linked (GlcNAc...) asparagine glycosylation sites follow: Asn-422 and Asn-444. The 136-residue stretch at 431–566 (NKPVLEYVLT…GGLSNQFLER (136 aa)) folds into the Plastocyanin-like 3 domain. Cu cation contacts are provided by His-477, His-480, His-482, His-548, Cys-549, His-550, and His-554. A propeptide spanning residues 607–619 (RSGVKAREVKMKW) is cleaved from the precursor.

This sequence belongs to the multicopper oxidase family. Cu cation serves as cofactor.

It localises to the secreted. It carries out the reaction 4 hydroquinone + O2 = 4 benzosemiquinone + 2 H2O. Lignin degradation and detoxification of lignin-derived products. The polypeptide is Laccase (lacc) (Neurospora crassa (strain ATCC 24698 / 74-OR23-1A / CBS 708.71 / DSM 1257 / FGSC 987)).